A 121-amino-acid polypeptide reads, in one-letter code: Mitochondrial intermembrane space cysteine motif-containing protein MIX14 (121 aa).

2 CHCH domains span residues 14-56 (VANC…VPSV) and 60-105 (MSEC…VKNK). Short sequence motifs (cx9C motif) lie at residues 17 to 27 (CPQEFLQYHKC), 38 to 48 (CKDGRMILSTC), 63 to 73 (CSEPMKKYDQC), and 87 to 97 (CLGFLQDLRKC). Cystine bridges form between C17/C48, C27/C38, C63/C97, and C73/C87.

Its subcellular location is the mitochondrion intermembrane space. The polypeptide is Mitochondrial intermembrane space cysteine motif-containing protein MIX14 (MIX14) (Saccharomyces cerevisiae (strain ATCC 204508 / S288c) (Baker's yeast)).